A 1047-amino-acid chain; its full sequence is Carbamoyl phosphate synthase large chain (1047 aa).

The interval 1–398 (MPRRDDIHRI…ALMKAIASLD (398 aa)) is carboxyphosphate synthetic domain. The ATP site is built by R129, R169, G175, G176, E208, L210, E215, G241, V242, H243, Q284, and E296. An ATP-grasp 1 domain is found at 133-325 (YEFLKAMGEP…IARIAAKIAA (193 aa)). Mg(2+)-binding residues include Q284, E296, and N298. Residues Q284, E296, and N298 each coordinate Mn(2+). The oligomerization domain stretch occupies residues 399–539 (NAFSSNIRLH…YSTYEDEDET (141 aa)). Residues 540–916 (PDLSGSIMII…ALRKSLQRSI (377 aa)) are carbamoyl phosphate synthetic domain. The region spanning 665–854 (SRVIEGLGIK…WVRLAVECMI (190 aa)) is the ATP-grasp 2 domain. ATP contacts are provided by R701, K738, L740, E745, G770, V771, H772, S773, Q813, and E825. Q813, E825, and N827 together coordinate Mg(2+). The Mn(2+) site is built by Q813, E825, and N827. One can recognise an MGS-like domain in the interval 910 to 1047 (KSLQRSISSV…REIGDYLQVS (138 aa)). The tract at residues 916-1047 (ISSVLITVRD…REIGDYLQVS (132 aa)) is allosteric domain.

It belongs to the CarB family. In terms of assembly, composed of two chains; the small (or glutamine) chain promotes the hydrolysis of glutamine to ammonia, which is used by the large (or ammonia) chain to synthesize carbamoyl phosphate. Tetramer of heterodimers (alpha,beta)4. The cofactor is Mg(2+). Requires Mn(2+) as cofactor.

The enzyme catalyses hydrogencarbonate + L-glutamine + 2 ATP + H2O = carbamoyl phosphate + L-glutamate + 2 ADP + phosphate + 2 H(+). It carries out the reaction hydrogencarbonate + NH4(+) + 2 ATP = carbamoyl phosphate + 2 ADP + phosphate + 2 H(+). It participates in amino-acid biosynthesis; L-arginine biosynthesis; carbamoyl phosphate from bicarbonate: step 1/1. It functions in the pathway pyrimidine metabolism; UMP biosynthesis via de novo pathway; (S)-dihydroorotate from bicarbonate: step 1/3. Large subunit of the glutamine-dependent carbamoyl phosphate synthetase (CPSase). CPSase catalyzes the formation of carbamoyl phosphate from the ammonia moiety of glutamine, carbonate, and phosphate donated by ATP, constituting the first step of 2 biosynthetic pathways, one leading to arginine and/or urea and the other to pyrimidine nucleotides. The large subunit (synthetase) binds the substrates ammonia (free or transferred from glutamine from the small subunit), hydrogencarbonate and ATP and carries out an ATP-coupled ligase reaction, activating hydrogencarbonate by forming carboxy phosphate which reacts with ammonia to form carbamoyl phosphate. In Thermoplasma acidophilum (strain ATCC 25905 / DSM 1728 / JCM 9062 / NBRC 15155 / AMRC-C165), this protein is Carbamoyl phosphate synthase large chain.